The following is a 443-amino-acid chain: tRNA (guanine-N(7)-)-methyltransferase non-catalytic subunit TRM82 (443 aa).

The segment at 67-93 (ASKKLKTNDGEPVAQPKKQAKVPKPGP) is disordered. WD repeat units follow at residues 97 to 137 (PVYQ…KDNI), 193 to 235 (GHVS…IVDK), and 239 to 279 (GHEE…LLFK).

It belongs to the WD repeat TRM82 family. In terms of assembly, forms a heterodimer with the catalytic subunit TRM8.

It localises to the nucleus. It participates in tRNA modification; N(7)-methylguanine-tRNA biosynthesis. Functionally, required for the formation of N(7)-methylguanine at position 46 (m7G46) in tRNA. In the complex, it is required to stabilize and induce conformational changes of the catalytic subunit. This is tRNA (guanine-N(7)-)-methyltransferase non-catalytic subunit TRM82 from Kluyveromyces lactis (strain ATCC 8585 / CBS 2359 / DSM 70799 / NBRC 1267 / NRRL Y-1140 / WM37) (Yeast).